The sequence spans 440 residues: Probable cytosolic iron-sulfur protein assembly protein 1 (440 aa).

7 WD repeats span residues 12–51, 71–110, 148–187, 193–233, 278–317, 326–379, and 401–440; these read AHAE…SSDG, DHKR…SDDE, GHES…DFEC, EHSQ…WCIF, EEDE…PDSA, AHSR…SPSS, and HGVN…VVRD. Residues 107–116 show a composition bias toward acidic residues; it reads SDDEEEEDEG. The disordered stretch occupies residues 107 to 137; it reads SDDEEEEDEGAQGVYKPAGVDSDGDGDGGKE.

The protein belongs to the WD repeat CIA1 family.

Functionally, essential component of the cytosolic iron-sulfur (Fe/S) protein assembly machinery. Required for the maturation of extramitochondrial Fe/S proteins. The polypeptide is Probable cytosolic iron-sulfur protein assembly protein 1 (Cryptococcus neoformans var. neoformans serotype D (strain B-3501A) (Filobasidiella neoformans)).